Reading from the N-terminus, the 370-residue chain is Putative agmatine deiminase (370 aa).

The active-site Amidino-cysteine intermediate is the Cys-361.

It belongs to the agmatine deiminase family.

The catalysed reaction is agmatine + H2O = N-carbamoylputrescine + NH4(+). In Shewanella sp. (strain MR-4), this protein is Putative agmatine deiminase.